The sequence spans 125 residues: UPF0593 mitochondrial protein C806.05 (125 aa).

The protein belongs to the UPF0593 family.

The protein localises to the mitochondrion. In Schizosaccharomyces pombe (strain 972 / ATCC 24843) (Fission yeast), this protein is UPF0593 mitochondrial protein C806.05.